The following is a 66-amino-acid chain: Large ribosomal subunit protein eL24 (66 aa).

Zn(2+) contacts are provided by Cys-6, Cys-9, Cys-32, and Cys-36. The C4-type zinc-finger motif lies at 6–36 (CSFCGKTIEPGTGIMYVRKDGAILYFCSNKC).

The protein belongs to the eukaryotic ribosomal protein eL24 family. As to quaternary structure, part of the 50S ribosomal subunit. Forms a cluster with proteins L3 and L14. The cofactor is Zn(2+).

Functionally, binds to the 23S rRNA. The chain is Large ribosomal subunit protein eL24 from Thermoplasma volcanium (strain ATCC 51530 / DSM 4299 / JCM 9571 / NBRC 15438 / GSS1).